The primary structure comprises 397 residues: Tryptophan synthase beta chain (397 aa).

Lysine 87 is subject to N6-(pyridoxal phosphate)lysine.

This sequence belongs to the TrpB family. Tetramer of two alpha and two beta chains. Pyridoxal 5'-phosphate serves as cofactor.

It carries out the reaction (1S,2R)-1-C-(indol-3-yl)glycerol 3-phosphate + L-serine = D-glyceraldehyde 3-phosphate + L-tryptophan + H2O. It functions in the pathway amino-acid biosynthesis; L-tryptophan biosynthesis; L-tryptophan from chorismate: step 5/5. Functionally, the beta subunit is responsible for the synthesis of L-tryptophan from indole and L-serine. The polypeptide is Tryptophan synthase beta chain (Salmonella arizonae (strain ATCC BAA-731 / CDC346-86 / RSK2980)).